Here is a 318-residue protein sequence, read N- to C-terminus: Replication factor C small subunit (318 aa).

43 to 50 contacts ATP; it reads GPAGTGKT.

This sequence belongs to the activator 1 small subunits family. RfcS subfamily. Heteromultimer composed of small subunits (RfcS) and large subunits (RfcL).

Part of the RFC clamp loader complex which loads the PCNA sliding clamp onto DNA. The polypeptide is Replication factor C small subunit (Picrophilus torridus (strain ATCC 700027 / DSM 9790 / JCM 10055 / NBRC 100828 / KAW 2/3)).